A 163-amino-acid polypeptide reads, in one-letter code: E1B protein, small T-antigen (163 aa).

Belongs to the adenoviridae E1B 19 kDa protein family.

The protein localises to the host cell membrane. Its subcellular location is the host nucleus envelope. The protein resides in the host nucleus lamina. In terms of biological role, putative adenovirus Bcl-2 homolog that inhibits apoptosis induced by TNF or FAS pathways, as well as p53-mediated apoptosis. Without E1B 19K function, virus production is compromised because of premature death of host cell. Interacts with Bax protein in cell lysates. This chain is E1B protein, small T-antigen, found in Human adenovirus A serotype 12 (HAdV-12).